The primary structure comprises 211 residues: Claudin-13 (211 aa).

The Cytoplasmic segment spans residues 1–8 (MVVSKQEA). Residues 9–29 (ISFSVTSLGWVGAIVSCVLPV) form a helical membrane-spanning segment. Over 30-80 (WRVTFPDDETDPDATIWEGLWHICQVRENRWIQCTLYDTRILVAQDIKVSR) the chain is Extracellular. A helical transmembrane segment spans residues 81–101 (VFMVICTIGTWLGLLLCVLGD). Topologically, residues 102–118 (WRINCFMNFTIEENLLK) are cytoplasmic. Residues 119–139 (VAGGMFLSVGLLMLVPLSWVT) form a helical membrane-spanning segment. Residues 140-165 (HNIIHGFFNPLLGFSKKVQMGSSLSL) lie on the Extracellular side of the membrane. A helical transmembrane segment spans residues 166 to 186 (AWTSSLLLLLGGILLCVNIPV). Residues 187-211 (CRDFPRCIETPSARPSGANNDTLDV) are Cytoplasmic-facing.

Belongs to the claudin family.

Its subcellular location is the cell junction. It localises to the tight junction. The protein resides in the cell membrane. Its function is as follows. Plays a major role in tight junction-specific obliteration of the intercellular space, through calcium-independent cell-adhesion activity. This is Claudin-13 (Cldn13) from Mus musculus (Mouse).